Reading from the N-terminus, the 267-residue chain is Pro-opiomelanocortin (267 aa).

The N-terminal stretch at 1–26 (MPRLCGSRSGALLLTLLLQASMGVRG) is a signal peptide. At phenylalanine 87 the chain carries Phenylalanine amide. Disordered stretches follow at residues 88–156 (GRRN…RPVK) and 215–242 (KKDE…GFMT). Asparagine 91 is a glycosylation site (N-linked (GlcNAc...) asparagine). Positions 94-105 (SSGGGGGGGGAG) are enriched in gly residues. Positions 109 to 133 (EEEEVAAGEGPGPRGDGVAPGPRQD) are excised as a propeptide. Residues 131-143 (RQDKRSYSMEHFR) show a composition bias toward basic and acidic residues. Residue serine 136 is modified to N-acetylserine; in Corticotropin. Valine 148 carries the valine amide modification. A compositionally biased stretch (basic and acidic residues) spans 215-237 (KKDEGPYKMEHFRWGSPPKDKRY).

It belongs to the POMC family. In terms of processing, specific enzymatic cleavages at paired basic residues yield the different active peptides. In terms of tissue distribution, ACTH and MSH are produced by the pituitary gland.

The protein localises to the secreted. Its function is as follows. Stimulates the adrenal glands to release cortisol. In terms of biological role, anorexigenic peptide. Increases the pigmentation of skin by increasing melanin production in melanocytes. Functionally, increases the pigmentation of skin by increasing melanin production in melanocytes. Endogenous orexigenic opiate. Its function is as follows. Endogenous opiate. The sequence is that of Pro-opiomelanocortin (POMC) from Sus scrofa (Pig).